A 628-amino-acid chain; its full sequence is MAAAAISHLRRGAPRHARALLYLSTRRFSSSSAAGVAPLAAVAASARRLLSTSVDSGASSTGESYKPPLFDPFRAASLASSAPPLESPPIEELPDDATPPPEEEPGLPAPEKDPVATACQHELEGLKAWVETVRSRKESTEEKEAWSLLGRSVVSYCGTAVGTVAANDPSTANQMLNYDQVFIRDFVPSAIAFLLKGEGDIVKNFLLHTLQLQSWEKTVDCYSPGQGLMPASFKVRSIPLDGNSEAFEEVLDPDFGESAIGRVAPVDSGLWWIILLRAYGKITGDYALQERVDVQTGIRLILNLCLSDGFDMFPTLLVTDGSCMIDRRMGIHGHPLEIQSLFYSALRCAREMVSVNDGSNSLIRAINYRLSALSFHIREYYWVDMKKINEIYRYKTEEYSHDAINKFNIYPEQIPSWLADWIPEKGGYLIGNLQPAHMDFRFFSLGNLWAIISSLATQRQAEGILNLIEAKWEDIIANMPLKICYPALEYEEWRIITGSDPKNTPWSYHNGGSWPTLLWQFTLACIKMGRRDLAQRAIEVAEKRLSEDKWPEYYDTRTGRFIGKQSRLYQTWTIAGYLSSKMLLDCPELASILICEEDLELLEGCACSVNKSARTKCSRRAARSQVLV.

The transit peptide at M1–G35 directs the protein to the mitochondrion. Residues A79 to I90 are compositionally biased toward low complexity. Residues A79–D113 are disordered.

Belongs to the glycosyl hydrolase 100 family. Expressed in roots, leaf and stems.

It localises to the mitochondrion. The catalysed reaction is Hydrolysis of terminal non-reducing beta-D-fructofuranoside residues in beta-D-fructofuranosides.. Its function is as follows. Mitochondrial invertase that cleaves sucrose into glucose and fructose. This Oryza sativa subsp. japonica (Rice) protein is Neutral/alkaline invertase 1, mitochondrial.